Here is a 215-residue protein sequence, read N- to C-terminus: MATGDDIPTFKLVLVGDGGTGKTTFVKRHLTGDPEKKYVATLGVEVHPLIFHTNRGQIRFNVWDTAGQEKFGGLRDGYYIQGQCAIIMFDVTARVTYKNVPNWHRDLARVCENIPIVLCGNFVDVKDRKVKAKTITFHRKKNLQYYDISAKSNYNFEKPSLWLVRKLLGDPNLEFVAMPALAPPEVQMDPTMVAQYEQEIAAAANAELPDDDEDL.

The region spanning 6 to 170 (DIPTFKLVLV…LWLVRKLLGD (165 aa)) is the Small GTPase Ran-type domain. GTP contacts are provided by residues 17–24 (DGGTGKTT), 35–41 (EKKYVAT), Gly-67, 121–124 (NFVD), and 149–151 (SAK). The switch-I stretch occupies residues 36 to 44 (KKYVATLGV). Residues 67–83 (GQEKFGGLRDGYYIQGQ) form a switch-II region. Positions 210–215 (DDDEDL) are interaction with RANBP1.

This sequence belongs to the small GTPase superfamily. Ran family. In terms of assembly, monomer. Interacts with RANGAP1, which promotes RAN-mediated GTP hydrolysis. Interacts with KPNB1. Interaction with KPNB1 inhibits RANGAP1-mediated stimulation of GTPase activity. Interacts with RCC1 which promotes the exchange of RAN-bound GDP by GTP. Interaction with KPNB1 inhibits RCC1-mediated exchange of RAN-bound GDP by GTP. Interacts (GTP-bound form) with TNPO1; the interaction is direct. Interacts with KPNB1 and with TNPO1; both inhibit RAN GTPase activity. Interacts (via C-terminus) with RANBP1, which alleviates the inhibition of RAN GTPase activity. Interacts with RANGRF, which promotes the release of bound guanine nucleotide. RANGRF and RCC1 compete for an overlapping binding site on RAN. Identified in a complex with KPNA2 and CSE1L; interaction with RANBP1 mediates dissociation of RAN from this complex. Interaction with both RANBP1 and KPNA2 promotes dissociation of the complex between RAN and KPNB1. Identified in a complex composed of RAN, RANGAP1 and RANBP1. Identified in a complex that contains TNPO1, RAN and RANBP1. Identified in a nuclear export complex with XPO1. Interaction with RANBP1 or RANBP2 induces a conformation change in the complex formed by XPO1 and RAN that triggers the release of the nuclear export signal of cargo proteins. Component of a nuclear export receptor complex composed of KPNB1, RAN, SNUPN and XPO1. Requires Mg(2+) as cofactor.

Its subcellular location is the nucleus. The protein localises to the nucleus envelope. It localises to the cytoplasm. The protein resides in the cytosol. In terms of biological role, GTPase involved in nucleocytoplasmic transport, participating both to the import and the export from the nucleus of proteins and RNAs. Switches between a cytoplasmic GDP- and a nuclear GTP-bound state by nucleotide exchange and GTP hydrolysis. Nuclear import receptors such as importin beta bind their substrates only in the absence of GTP-bound RAN and release them upon direct interaction with GTP-bound RAN, while export receptors behave in the opposite way. Thereby, RAN controls cargo loading and release by transport receptors in the proper compartment and ensures the directionality of the transport. Interaction with RANBP1 induces a conformation change in the complex formed by XPO1 and RAN that triggers the release of the nuclear export signal of cargo proteins. RAN (GTP-bound form) triggers microtubule assembly at mitotic chromosomes and is required for normal mitotic spindle assembly and chromosome segregation. Required for normal progress through mitosis. In Onchocerca volvulus, this protein is GTP-binding nuclear protein Ran (ran-1).